Reading from the N-terminus, the 490-residue chain is Tryptophan 5-hydroxylase 2 (490 aa).

S19 carries the phosphoserine modification. The interval 34 to 62 is disordered; that stretch reads LTLNKANSGKNDDKGNKGSSKNETATESG. Residues 50–62 are compositionally biased toward polar residues; that stretch reads KGSSKNETATESG. One can recognise an ACT domain in the interval 65-140; sequence AVVFSLKNEV…TIVTLNPPEN (76 aa). 3 residues coordinate Fe cation: H318, H323, and E363.

This sequence belongs to the biopterin-dependent aromatic amino acid hydroxylase family. As to quaternary structure, interacts with DNAJC12. It depends on Fe(2+) as a cofactor.

The catalysed reaction is (6R)-L-erythro-5,6,7,8-tetrahydrobiopterin + L-tryptophan + O2 = 5-hydroxy-L-tryptophan + (4aS,6R)-4a-hydroxy-L-erythro-5,6,7,8-tetrahydrobiopterin. The protein operates within aromatic compound metabolism; serotonin biosynthesis; serotonin from L-tryptophan: step 1/2. The polypeptide is Tryptophan 5-hydroxylase 2 (TPH2) (Macaca mulatta (Rhesus macaque)).